The sequence spans 460 residues: Elongation factor 1-alpha (460 aa).

N,N,N-trimethylglycine is present on glycine 2. Lysine 3 is subject to N6,N6-dimethyllysine; alternate. N6-methyllysine; alternate is present on lysine 3. The 236-residue stretch at 6–241 folds into the tr-type G domain; that stretch reads KTHINVVVIG…DSIEPPKRPT (236 aa). Residues 15–22 are G1; the sequence is GHVDSGKS. 15–22 contributes to the GTP binding site; sequence GHVDSGKS. The tract at residues 71–75 is G2; the sequence is GITID. Lysine 80 bears the N6,N6,N6-trimethyllysine mark. The interval 92 to 95 is G3; sequence DAPG. GTP contacts are provided by residues 92–96 and 154–157; these read DAPGH and NKMD. The tract at residues 154–157 is G4; that stretch reads NKMD. A G5 region spans residues 193–195; the sequence is SGF. N6,N6-dimethyllysine; alternate is present on lysine 317. Position 317 is an N6-methyllysine; alternate (lysine 317). Lysine 391 bears the N6-methyllysine mark.

This sequence belongs to the TRAFAC class translation factor GTPase superfamily. Classic translation factor GTPase family. EF-Tu/EF-1A subfamily.

Its subcellular location is the cytoplasm. In terms of biological role, this protein promotes the GTP-dependent binding of aminoacyl-tRNA to the A-site of ribosomes during protein biosynthesis. The chain is Elongation factor 1-alpha (tef1) from Hypocrea jecorina (Trichoderma reesei).